Consider the following 238-residue polypeptide: Sugar fermentation stimulation protein homolog (238 aa).

This sequence belongs to the SfsA family.

This Vibrio parahaemolyticus serotype O3:K6 (strain RIMD 2210633) protein is Sugar fermentation stimulation protein homolog.